We begin with the raw amino-acid sequence, 179 residues long: ATP synthase subunit delta (179 aa).

Belongs to the ATPase delta chain family. F-type ATPases have 2 components, F(1) - the catalytic core - and F(0) - the membrane proton channel. F(1) has five subunits: alpha(3), beta(3), gamma(1), delta(1), epsilon(1). F(0) has three main subunits: a(1), b(2) and c(10-14). The alpha and beta chains form an alternating ring which encloses part of the gamma chain. F(1) is attached to F(0) by a central stalk formed by the gamma and epsilon chains, while a peripheral stalk is formed by the delta and b chains.

Its subcellular location is the cell membrane. F(1)F(0) ATP synthase produces ATP from ADP in the presence of a proton or sodium gradient. F-type ATPases consist of two structural domains, F(1) containing the extramembraneous catalytic core and F(0) containing the membrane proton channel, linked together by a central stalk and a peripheral stalk. During catalysis, ATP synthesis in the catalytic domain of F(1) is coupled via a rotary mechanism of the central stalk subunits to proton translocation. In terms of biological role, this protein is part of the stalk that links CF(0) to CF(1). It either transmits conformational changes from CF(0) to CF(1) or is implicated in proton conduction. The polypeptide is ATP synthase subunit delta (Metamycoplasma arthritidis (strain 158L3-1) (Mycoplasma arthritidis)).